Here is a 107-residue protein sequence, read N- to C-terminus: Serine-rich and transmembrane domain-containing protein 1 (107 aa).

The helical transmembrane segment at 43 to 63 (IYVSIFLSLLAFLLLLLIIAL) threads the bilayer.

The protein resides in the membrane. In Homo sapiens (Human), this protein is Serine-rich and transmembrane domain-containing protein 1 (SERTM1).